Consider the following 712-residue polypeptide: Anaerobic ribonucleoside-triphosphate reductase (712 aa).

In terms of domain architecture, ATP-cone spans 3 to 92; sequence PHVMKRDGCK…EYRHDRDIER (90 aa). In terms of domain architecture, Glycine radical spans 583–708; the sequence is KKVNPYDKID…VKRRVKHLGN (126 aa). Zn(2+)-binding residues include cysteine 644, cysteine 647, cysteine 662, and cysteine 665. A Glycine radical modification is found at glycine 681.

It belongs to the anaerobic ribonucleoside-triphosphate reductase family. In terms of assembly, homodimer. Forms a tetramer composed of two NrdD and two NrdG subunits.

The catalysed reaction is a ribonucleoside 5'-triphosphate + formate + H(+) = a 2'-deoxyribonucleoside 5'-triphosphate + CO2 + H2O. It catalyses the reaction formate + ATP + H(+) = dATP + CO2 + H2O. It carries out the reaction CTP + formate + H(+) = dCTP + CO2 + H2O. The enzyme catalyses GTP + formate + H(+) = dGTP + CO2 + H2O. The catalysed reaction is UTP + formate + H(+) = dUTP + CO2 + H2O. Its activity is regulated as follows. Activated under anaerobic conditions by NrdG, a tightly associated activase. Activation involves the formation of a glycyl radical at Gly-681. Exposure of the activated reductase to oxygen leads to C-terminal truncation and inactivation of the protein, by cleavage at the N-terminal side of Gly-681. The presence of zinc protects the protein from proteolysis and prevents the formation of disulfide bridges within it. The enzyme shows a basal activity in the absence of any effector, but reduction is stimulated up to 10-fold by an appropriate modulator (dGTP for ATP reduction, ATP for CTP and UTP reduction, and dTTP for GTP reduction). dGTP and dTTP inhibit the reduction of the incorrect substrate, and dATP inhibits reduction of all four. These modulators act as allosteric effectors. In terms of biological role, catalyzes the conversion of ribonucleotides into deoxyribonucleotides, which are required for DNA synthesis and repair. Can reduce each of the four common ribonucleoside triphosphates. This chain is Anaerobic ribonucleoside-triphosphate reductase, found in Escherichia coli (strain K12).